We begin with the raw amino-acid sequence, 1407 residues long: DNA-directed RNA polymerase subunit beta' (1407 aa).

Residues Cys-70, Cys-72, Cys-85, and Cys-88 each contribute to the Zn(2+) site. Mg(2+)-binding residues include Asp-460, Asp-462, and Asp-464. Zn(2+) is bound by residues Cys-814, Cys-888, Cys-895, and Cys-898.

The protein belongs to the RNA polymerase beta' chain family. The RNAP catalytic core consists of 2 alpha, 1 beta, 1 beta' and 1 omega subunit. When a sigma factor is associated with the core the holoenzyme is formed, which can initiate transcription. Mg(2+) serves as cofactor. It depends on Zn(2+) as a cofactor.

The enzyme catalyses RNA(n) + a ribonucleoside 5'-triphosphate = RNA(n+1) + diphosphate. DNA-dependent RNA polymerase catalyzes the transcription of DNA into RNA using the four ribonucleoside triphosphates as substrates. In Cellvibrio japonicus (strain Ueda107) (Pseudomonas fluorescens subsp. cellulosa), this protein is DNA-directed RNA polymerase subunit beta'.